Consider the following 421-residue polypeptide: Histidine--tRNA ligase (421 aa).

The protein belongs to the class-II aminoacyl-tRNA synthetase family. As to quaternary structure, homodimer.

It is found in the cytoplasm. The enzyme catalyses tRNA(His) + L-histidine + ATP = L-histidyl-tRNA(His) + AMP + diphosphate + H(+). This chain is Histidine--tRNA ligase, found in Francisella tularensis subsp. holarctica (strain LVS).